Reading from the N-terminus, the 255-residue chain is MRILIANDDGYLAPGIAALVKACEGLGTIDVIAPEQNASGTSNALTLNRPLSVFEARGEPVQGFRVVNGTPSDSVHVALTGLLPHKPDLVLSGINQGANMGDDTLYSGTVAAAMEGYLFGVPAIAFSQAEKGWTHLDAAAATARAIVEQVLAGGPPTGPWLLNVNIPNRADAASLPRLVTRLGRRHASEPVIRQTNPRGEPIYWIGPAGDARDAGEGTDFHAVAHGAVSITPLQVDLTDHAMRGAWASRLGVPLA.

Positions 8, 9, 39, and 95 each coordinate a divalent metal cation.

This sequence belongs to the SurE nucleotidase family. A divalent metal cation serves as cofactor.

The protein localises to the cytoplasm. It carries out the reaction a ribonucleoside 5'-phosphate + H2O = a ribonucleoside + phosphate. In terms of biological role, nucleotidase that shows phosphatase activity on nucleoside 5'-monophosphates. This chain is 5'-nucleotidase SurE, found in Rubrivivax gelatinosus (strain NBRC 100245 / IL144).